A 411-amino-acid chain; its full sequence is Mitogen-activated protein kinase 8 (411 aa).

Residues 26 to 321 (YQNLKPIGSG…VDEALQHPYI (296 aa)) enclose the Protein kinase domain. Residues 32 to 40 (IGSGAQGIV) and K55 contribute to the ATP site. C116 bears the S-nitrosocysteine; in inhibited form mark. D151 acts as the Proton acceptor in catalysis. Phosphothreonine; by MAP2K7 is present on T183. The short motif at 183–185 (TPY) is the TXY element. Residue Y185 is modified to Phosphotyrosine; by MAP2K4. The disordered stretch occupies residues 368-411 (KNGVIRGQPSPLGAAVINGSQHPVSSPSVNDMSSMSTDPTLASD). A Phosphoserine modification is found at S377. Low complexity predominate over residues 390 to 403 (PVSSPSVNDMSSMS).

Belongs to the protein kinase superfamily. CMGC Ser/Thr protein kinase family. MAP kinase subfamily. As to quaternary structure, forms a complex with MAPK8IP1 and ARHGEF28. Found in a complex with SH3RF1, RAC1, MAP3K11/MLK3, MAP2K7/MKK7 and MAPK8IP1/JIP1. Found in a complex with SH3RF1, RAC2, MAP3K7/TAK1, MAP2K7/MKK7, MAPK8IP1/JIP1 and MAPK9/JNK2. Binds to at least four scaffolding proteins, MAPK8IP1/JIP-1, MAPK8IP2/JIP-2, MAPK8IP3/JIP-3/JSAP1 and SPAG9/MAPK8IP4/JIP-4. These proteins also bind other components of the JNK signaling pathway. Interacts with TP53, WWOX. Interacts with JAMP. Interacts with NFATC4. Interacts (phosphorylated form) with NFE2; the interaction phosphorylates NFE2 in undifferentiated cells. Interacts with MECOM; regulates JNK signaling. Interacts with PIN1; this interaction mediates MAPK8 conformational changes leading to the binding of MAPK8 to its substrates. Interacts with HSF1 (via D domain and preferentially with hyperphosphorylated form); this interaction occurs under both normal growth conditions and immediately upon heat shock. Interacts with STMN2, STMN3 and STMN4. Interacts with GRIPAP1. Interacts with POU5F1; phosphorylates POU5F1 at 'Ser-347'. Interacts with HSF4. Requires Mg(2+) as cofactor. Dually phosphorylated on Thr-183 and Tyr-185 by MAP2K7 and MAP2K4, which activates the enzyme. Phosphorylated by TAOK2. Phosphorylated form is more concentrated at synapses than none-phosphorylated. In terms of processing, nitrosylated upon IFN-gamma-induced endogenous NO production, which inhibits the enzyme. May be phosphorylated at Thr-183 and Tyr-185 by MAP3K1/MEKK1.

The protein localises to the cytoplasm. The protein resides in the nucleus. Its subcellular location is the synapse. The enzyme catalyses L-seryl-[protein] + ATP = O-phospho-L-seryl-[protein] + ADP + H(+). It carries out the reaction L-threonyl-[protein] + ATP = O-phospho-L-threonyl-[protein] + ADP + H(+). Activated by threonine and tyrosine phosphorylation by either of two dual specificity kinases, MAP2K4 and MAP2K7. MAP2K4 shows a strong preference for Tyr-185 while MAP2K7 phosphorylates Tyr-183 preferentially. Inhibited by dual specificity phosphatases, such as DUSP1. Inhibited by SERPINB3. Inhibited by IFN-gamma-induced S-nitrosylation. Its function is as follows. Serine/threonine-protein kinase involved in various processes such as cell proliferation, differentiation, migration, transformation and programmed cell death. Extracellular stimuli such as pro-inflammatory cytokines or physical stress stimulate the stress-activated protein kinase/c-Jun N-terminal kinase (SAP/JNK) signaling pathway. In this cascade, two dual specificity kinases MAP2K4/MKK4 and MAP2K7/MKK7 phosphorylate and activate MAPK8/JNK1. In turn, MAPK8/JNK1 phosphorylates a number of transcription factors, primarily components of AP-1 such as JUN, JDP2 and ATF2 and thus regulates AP-1 transcriptional activity. Phosphorylates the replication licensing factor CDT1, inhibiting the interaction between CDT1 and the histone H4 acetylase HBO1 to replication origins. Loss of this interaction abrogates the acetylation required for replication initiation. Promotes stressed cell apoptosis by phosphorylating key regulatory factors including p53/TP53 and Yes-associates protein YAP1. In T-cells, MAPK8 and MAPK9 are required for polarized differentiation of T-helper cells into Th1 cells. Contributes to the survival of erythroid cells by phosphorylating the antagonist of cell death BAD upon EPO stimulation. Mediates starvation-induced BCL2 phosphorylation, BCL2 dissociation from BECN1, and thus activation of autophagy. Phosphorylates STMN2 and hence regulates microtubule dynamics, controlling neurite elongation in cortical neurons. In the developing brain, through its cytoplasmic activity on STMN2, negatively regulates the rate of exit from multipolar stage and of radial migration from the ventricular zone. Phosphorylates several other substrates including heat shock factor protein 4 (HSF4), the deacetylase SIRT1, ELK1, or the E3 ligase ITCH. Phosphorylates the CLOCK-BMAL1 heterodimer and plays a role in the regulation of the circadian clock. Phosphorylates the heat shock transcription factor HSF1, suppressing HSF1-induced transcriptional activity. Phosphorylates POU5F1, which results in the inhibition of POU5F1's transcriptional activity and enhances its proteasomal degradation. Phosphorylates JUND and this phosphorylation is inhibited in the presence of MEN1. In neurons, phosphorylates SYT4 which captures neuronal dense core vesicles at synapses. Phosphorylates EIF4ENIF1/4-ET in response to oxidative stress, promoting P-body assembly. Phosphorylates SIRT6 in response to oxidative stress, stimulating its mono-ADP-ribosyltransferase activity. Phosphorylates NLRP3, promoting assembly of the NLRP3 inflammasome. Phosphorylates ALKBH5 in response to reactive oxygen species (ROS), promoting ALKBH5 sumoylation and inactivation. This is Mitogen-activated protein kinase 8 (Mapk8) from Rattus norvegicus (Rat).